The chain runs to 407 residues: Inactive non-canonical poly(A) RNA polymerase protein Trf4-2 (407 aa).

Residues aspartate 85 and aspartate 87 each contribute to the Mg(2+) site. Positions 221-280 (LALLLIQFLDYYGRKFDFFKYGISVLGQGGCVEKARLRSTLGENNWQSVLCIEDPVTPTN) constitute a PAP-associated domain. The disordered stretch occupies residues 354–390 (LVQPSPTGSTSPSASASASEDERSGGPATIGFGRCDD). Residues 357–371 (PSPTGSTSPSASASA) show a composition bias toward low complexity.

Belongs to the DNA polymerase type-B-like family.

This is Inactive non-canonical poly(A) RNA polymerase protein Trf4-2 from Drosophila melanogaster (Fruit fly).